A 49-amino-acid polypeptide reads, in one-letter code: Large ribosomal subunit protein bL33B (49 aa).

The protein belongs to the bacterial ribosomal protein bL33 family.

The protein is Large ribosomal subunit protein bL33B of Bacillus licheniformis (strain ATCC 14580 / DSM 13 / JCM 2505 / CCUG 7422 / NBRC 12200 / NCIMB 9375 / NCTC 10341 / NRRL NRS-1264 / Gibson 46).